The following is a 117-amino-acid chain: MDKKAARIRRATRARRKLQELGATRLVVHRTPRHIYAQVIAPNGSETLVAASTTEKAIIEQLKNTGNKEAAAVVGKIVAERALEKGIKSVSFDRSGFQYHGRVQALADAAREAGLQF.

The protein belongs to the universal ribosomal protein uL18 family. As to quaternary structure, part of the 50S ribosomal subunit; part of the 5S rRNA/L5/L18/L25 subcomplex. Contacts the 5S and 23S rRNAs.

This is one of the proteins that bind and probably mediate the attachment of the 5S RNA into the large ribosomal subunit, where it forms part of the central protuberance. This chain is Large ribosomal subunit protein uL18, found in Proteus mirabilis (strain HI4320).